The following is a 142-amino-acid chain: Trafficking protein particle complex subunit 1 (142 aa).

The protein belongs to the TRAPP small subunits family. BET5 subfamily. In terms of assembly, part of the multisubunit TRAPP (transport protein particle) complex.

Its subcellular location is the golgi apparatus. The protein localises to the cis-Golgi network. It localises to the endoplasmic reticulum. In terms of biological role, may play a role in vesicular transport from endoplasmic reticulum to Golgi. This Dictyostelium discoideum (Social amoeba) protein is Trafficking protein particle complex subunit 1 (trappc1-1).